We begin with the raw amino-acid sequence, 509 residues long: ATP synthase subunit alpha (509 aa).

169–176 (GDRQTGKT) contributes to the ATP binding site.

Belongs to the ATPase alpha/beta chains family. As to quaternary structure, F-type ATPases have 2 components, CF(1) - the catalytic core - and CF(0) - the membrane proton channel. CF(1) has five subunits: alpha(3), beta(3), gamma(1), delta(1), epsilon(1). CF(0) has three main subunits: a(1), b(2) and c(9-12). The alpha and beta chains form an alternating ring which encloses part of the gamma chain. CF(1) is attached to CF(0) by a central stalk formed by the gamma and epsilon chains, while a peripheral stalk is formed by the delta and b chains.

Its subcellular location is the cell inner membrane. The enzyme catalyses ATP + H2O + 4 H(+)(in) = ADP + phosphate + 5 H(+)(out). Produces ATP from ADP in the presence of a proton gradient across the membrane. The alpha chain is a regulatory subunit. In Parvibaculum lavamentivorans (strain DS-1 / DSM 13023 / NCIMB 13966), this protein is ATP synthase subunit alpha.